Consider the following 407-residue polypeptide: S-adenosylmethionine synthase (407 aa).

Position 15 (His15) interacts with ATP. Asp17 provides a ligand contact to Mg(2+). Residue Glu43 coordinates K(+). Residues Glu56 and Gln100 each contribute to the L-methionine site. Residues 100–110 (QSPDIAQGVDE) form a flexible loop region. Residues 171–173 (DGK), 248–249 (KF), Asp257, 263–264 (RK), Ala280, and Lys284 each bind ATP. Asp257 serves as a coordination point for L-methionine. Lys288 contacts L-methionine.

It belongs to the AdoMet synthase family. As to quaternary structure, homotetramer; dimer of dimers. Requires Mg(2+) as cofactor. The cofactor is K(+).

The protein resides in the cytoplasm. It carries out the reaction L-methionine + ATP + H2O = S-adenosyl-L-methionine + phosphate + diphosphate. It participates in amino-acid biosynthesis; S-adenosyl-L-methionine biosynthesis; S-adenosyl-L-methionine from L-methionine: step 1/1. Its function is as follows. Catalyzes the formation of S-adenosylmethionine (AdoMet) from methionine and ATP. The overall synthetic reaction is composed of two sequential steps, AdoMet formation and the subsequent tripolyphosphate hydrolysis which occurs prior to release of AdoMet from the enzyme. In Synechococcus sp. (strain RCC307), this protein is S-adenosylmethionine synthase.